A 231-amino-acid polypeptide reads, in one-letter code: NADH-ubiquinone oxidoreductase chain 4 (231 aa).

The next 7 membrane-spanning stretches (helical) occupy residues 1-21 (PIAG…YGII), 34-54 (MFLP…LTCL), 63-85 (IAYS…TPWG), 89-111 (AMAL…NTTY), 128-148 (ILPM…ATPP), 169-189 (TIIL…HMFL), and 211-231 (LLMA…ELII).

This sequence belongs to the complex I subunit 4 family.

It is found in the mitochondrion membrane. The catalysed reaction is a ubiquinone + NADH + 5 H(+)(in) = a ubiquinol + NAD(+) + 4 H(+)(out). Core subunit of the mitochondrial membrane respiratory chain NADH dehydrogenase (Complex I) that is believed to belong to the minimal assembly required for catalysis. Complex I functions in the transfer of electrons from NADH to the respiratory chain. The immediate electron acceptor for the enzyme is believed to be ubiquinone. The protein is NADH-ubiquinone oxidoreductase chain 4 (MT-ND4) of Cerrophidion godmani (Porthidium godmani).